The primary structure comprises 128 residues: Small ribosomal subunit protein uS9 (128 aa).

Residues 97 to 113 (RSEGFMTRDSRSVERKK) are compositionally biased toward basic and acidic residues. Residues 97–128 (RSEGFMTRDSRSVERKKPGQPKARRRFQFSKR) are disordered. A compositionally biased stretch (basic residues) spans 114 to 128 (PGQPKARRRFQFSKR).

Belongs to the universal ribosomal protein uS9 family.

The chain is Small ribosomal subunit protein uS9 from Phocaeicola vulgatus (strain ATCC 8482 / DSM 1447 / JCM 5826 / CCUG 4940 / NBRC 14291 / NCTC 11154) (Bacteroides vulgatus).